Consider the following 188-residue polypeptide: Capsid protein (188 aa).

The protein belongs to the tymoviruses capsid protein family.

The protein resides in the virion. Functionally, self-assembles to form a T=3 icosahedral capsid composed of 180 copies of the capsid protein. The capsid encapsulates the single-stranded RNA genome. This is Capsid protein from Solanum lycopersicum (Tomato).